The following is a 307-amino-acid chain: Bifunctional protein FolD 3 (307 aa).

Residues 169–171 (GRS), Ser194, and Ile235 contribute to the NADP(+) site.

It belongs to the tetrahydrofolate dehydrogenase/cyclohydrolase family. In terms of assembly, homodimer.

It catalyses the reaction (6R)-5,10-methylene-5,6,7,8-tetrahydrofolate + NADP(+) = (6R)-5,10-methenyltetrahydrofolate + NADPH. The catalysed reaction is (6R)-5,10-methenyltetrahydrofolate + H2O = (6R)-10-formyltetrahydrofolate + H(+). It participates in one-carbon metabolism; tetrahydrofolate interconversion. In terms of biological role, catalyzes the oxidation of 5,10-methylenetetrahydrofolate to 5,10-methenyltetrahydrofolate and then the hydrolysis of 5,10-methenyltetrahydrofolate to 10-formyltetrahydrofolate. In Ectopseudomonas mendocina (strain ymp) (Pseudomonas mendocina), this protein is Bifunctional protein FolD 3.